Consider the following 631-residue polypeptide: Peptide-N(4)-(N-acetyl-beta-glucosaminyl)asparagine amidase (631 aa).

In terms of domain architecture, PUB spans 34-97; that stretch reads EAVRILLVLL…PSSNAYTLPT (64 aa). Position 126 is a phosphoserine (S126). Positions 246, 249, 272, and 273 each coordinate Zn(2+). The Nucleophile role is filled by C296. Residues H323 and D340 contribute to the active site. In terms of domain architecture, PAW spans 441-631; that stretch reads ELKGRSSGSL…YPFDLQVQLH (191 aa).

This sequence belongs to the transglutaminase-like superfamily. PNGase family. Zn(2+) serves as cofactor.

The protein resides in the cytoplasm. The catalysed reaction is Hydrolysis of an N(4)-(acetyl-beta-D-glucosaminyl)asparagine residue in which the glucosamine residue may be further glycosylated, to yield a (substituted) N-acetyl-beta-D-glucosaminylamine and a peptide containing an aspartate residue.. Functionally, specifically deglycosylates the denatured form of N-linked glycoproteins in the cytoplasm and assists their proteasome-mediated degradation. Cleaves the beta-aspartyl-glucosamine (GlcNAc) of the glycan and the amide side chain of Asn, converting Asn to Asp. Prefers proteins containing high-mannose over those bearing complex type oligosaccharides. Can recognize misfolded proteins in the endoplasmic reticulum that are exported to the cytosol to be destroyed and deglycosylate them, while it has no activity toward native proteins. Deglycosylation is a prerequisite for subsequent proteasome-mediated degradation of some, but not all, misfolded glycoproteins. The sequence is that of Peptide-N(4)-(N-acetyl-beta-glucosaminyl)asparagine amidase (Pngl) from Drosophila melanogaster (Fruit fly).